Reading from the N-terminus, the 865-residue chain is Xylosyltransferase 2 (865 aa).

The Cytoplasmic portion of the chain corresponds to 1-15; sequence MVASARVQKLVRRYK. The helical; Signal-anchor for type II membrane protein transmembrane segment at 16–36 threads the bilayer; sequence LAIATALAILLLQGLVVWSFS. Over 37 to 865 the chain is Lumenal; that stretch reads GLEEDEPGEK…GPVKADGRLR (829 aa). Residues 39–157 form a disordered region; that stretch reads EEDEPGEKGR…EGAPQPTDNG (119 aa). Over residues 53 to 65 the composition is skewed to basic and acidic residues; sequence RPLDPGEGSKDTD. The segment covering 73-82 has biased composition (basic residues); it reads SAGRRHGRWR. Asparagine 122 carries N-linked (GlcNAc...) asparagine glycosylation. A compositionally biased stretch (low complexity) spans 125–137; sequence GAAAGEALVGAAG. 4 cysteine pairs are disulfide-bonded: cysteine 162-cysteine 190, cysteine 206-cysteine 448, cysteine 467-cysteine 480, and cysteine 469-cysteine 478. Residues valine 239, aspartate 267, and 296 to 298 each bind UDP-alpha-D-xylose; that span reads TIW. N-linked (GlcNAc...) asparagine glycosylation occurs at asparagine 327. Residue 400-401 participates in UDP-alpha-D-xylose binding; the sequence is DW. Residues serine 481 and 504–505 each bind UDP-alpha-D-xylose; that span reads RK. Disulfide bonds link cysteine 581-cysteine 833 and cysteine 826-cysteine 839. N-linked (GlcNAc...) asparagine glycosylation occurs at asparagine 683.

Belongs to the glycosyltransferase 14 family. XylT subfamily. Monomer. Mg(2+) is required as a cofactor. It depends on Mn(2+) as a cofactor. In terms of processing, contains disulfide bonds.

The protein localises to the golgi apparatus membrane. The protein resides in the secreted. The enzyme catalyses UDP-alpha-D-xylose + L-seryl-[protein] = 3-O-(beta-D-xylosyl)-L-seryl-[protein] + UDP + H(+). It functions in the pathway glycan metabolism; chondroitin sulfate biosynthesis. It participates in glycan metabolism; heparan sulfate biosynthesis. Functionally, catalyzes the first step in the biosynthesis of chondroitin sulfate, heparan sulfate and dermatan sulfate proteoglycans, such as DCN. Transfers D-xylose from UDP-D-xylose to specific serine residues of the core protein. This chain is Xylosyltransferase 2 (XYLT2), found in Canis lupus familiaris (Dog).